A 249-amino-acid polypeptide reads, in one-letter code: Proteasome activator complex subunit 1 (249 aa).

The interval 59-102 (APLDIPVPDPVKEKEKEERKKQQEKEEKEEKKKGDEDDKGPPCG) is disordered. Residues 68–98 (PVKEKEKEERKKQQEKEEKEEKKKGDEDDKG) show a composition bias toward basic and acidic residues.

This sequence belongs to the PA28 family. In terms of assembly, heterodimer of PSME1 and PSME2, which forms a hexameric ring. PSME1 can form homoheptamers.

Its function is as follows. Implicated in immunoproteasome assembly and required for efficient antigen processing. The PA28 activator complex enhances the generation of class I binding peptides by altering the cleavage pattern of the proteasome. This Mus musculus (Mouse) protein is Proteasome activator complex subunit 1 (Psme1).